The chain runs to 186 residues: MDTETLKKNLQEKMDKALKVLDHELKGLRTGRASVNLLDSVTVEAYGSKMPLSQVASLSTPDARTINVQVWDKSMVSSVEKGITIANLGLTPATDGQLIRLPIPALTEERRKELVKLAHKYGEDTKISLRNIRRDGNEELKKLEKDNIIAKDEHHSLSEQVQKLTDDYSSKVDSAIKQKEQEIMTV.

It belongs to the RRF family.

It localises to the cytoplasm. Functionally, responsible for the release of ribosomes from messenger RNA at the termination of protein biosynthesis. May increase the efficiency of translation by recycling ribosomes from one round of translation to another. In Rickettsia felis (strain ATCC VR-1525 / URRWXCal2) (Rickettsia azadi), this protein is Ribosome-recycling factor.